The primary structure comprises 81 residues: Photosystem I iron-sulfur center (81 aa).

4Fe-4S ferredoxin-type domains lie at 2 to 31 (AHSVKIYDTCIGCTQCVRACPTDVLEMIPW) and 39 to 68 (IASAPRTEDCVGCKRCESACPTDFLSVRVY). The [4Fe-4S] cluster site is built by Cys-11, Cys-14, Cys-17, Cys-21, Cys-48, Cys-51, Cys-54, and Cys-58.

In terms of assembly, the eukaryotic PSI reaction center is composed of at least 11 subunits. Requires [4Fe-4S] cluster as cofactor.

Its subcellular location is the plastid. The protein localises to the chloroplast thylakoid membrane. The catalysed reaction is reduced [plastocyanin] + hnu + oxidized [2Fe-2S]-[ferredoxin] = oxidized [plastocyanin] + reduced [2Fe-2S]-[ferredoxin]. In terms of biological role, apoprotein for the two 4Fe-4S centers FA and FB of photosystem I (PSI); essential for photochemical activity. FB is the terminal electron acceptor of PSI, donating electrons to ferredoxin. The C-terminus interacts with PsaA/B/D and helps assemble the protein into the PSI complex. Required for binding of PsaD and PsaE to PSI. PSI is a plastocyanin-ferredoxin oxidoreductase, converting photonic excitation into a charge separation, which transfers an electron from the donor P700 chlorophyll pair to the spectroscopically characterized acceptors A0, A1, FX, FA and FB in turn. This chain is Photosystem I iron-sulfur center, found in Staurastrum punctulatum (Green alga).